Consider the following 122-residue polypeptide: Proteasome assembly chaperone 3 (122 aa).

M1 is modified (N-acetylmethionine).

The protein belongs to the PSMG3 family. As to quaternary structure, homodimer. Interacts with PSMG4. Interacts directly with alpha and beta subunits of the 20S proteasome but dissociates before the formation of half-proteasomes, probably upon recruitment of POMP.

Chaperone protein which promotes assembly of the 20S proteasome. May cooperate with PSMG1-PSMG2 heterodimers to orchestrate the correct assembly of proteasomes. The chain is Proteasome assembly chaperone 3 from Homo sapiens (Human).